The chain runs to 221 residues: Transcription factor otaR1 (221 aa).

The segment at 109-146 (ASRSRPAFSTPASRPGLSSAKSPSLGATSPGSMDRSEE) is disordered. The segment covering 127–139 (SAKSPSLGATSPG) has biased composition (polar residues). Positions 152-192 (KKYHEKYKERNRLAAGRSRQKQADLINLLQAEQQEEERRRK) are basic motif. Residues 152-215 (KKYHEKYKER…VDMKQELQHH (64 aa)) form the bZIP domain. A leucine-zipper region spans residues 198–212 (IANMQKELVDMKQEL).

It localises to the nucleus. Functionally, transcription factor; part of the gene cluster that mediates the biosynthesis of ochratoxin A (OTA), a mycotoxin demonstrated to have nephrotoxic, immunotoxic, genotoxic, neurotoxic, and teratogenic properties. Positively regulates the expression of the OTA biosynthetic genes and subsequent production of OTA. Probably binds to conserved 5'-ACGT-3' bZIP binding motifs found in multiple copies (3 to 4) in the promoters of the OTA biosynthetic genes. Acts not only as a pathway-specific regulator of the OTA cluster but also binds at other chromosomal positions outside the OTA cluster and can act as a broad regulator. Negatively regulates pathogenicity and plays a critical role in tolerance to reactive oxygen species (ROS). This is Transcription factor otaR1 from Aspergillus niger (strain ATCC MYA-4892 / CBS 513.88 / FGSC A1513).